The primary structure comprises 189 residues: Mediator of RNA polymerase II transcription subunit 30 (189 aa).

Residues 138–178 (SPESEDEIEKLEEQALSLRMEIAKKNVHVKELIDKLRELIA) are a coiled coil.

It belongs to the plant Mediator complex subunit 30 family. Component of the Mediator complex.

It localises to the nucleus. Component of the Mediator complex, a coactivator involved in the regulated transcription of nearly all RNA polymerase II-dependent genes. Mediator functions as a bridge to convey information from gene-specific regulatory proteins to the basal RNA polymerase II transcription machinery. The Mediator complex, having a compact conformation in its free form, is recruited to promoters by direct interactions with regulatory proteins and serves for the assembly of a functional preinitiation complex with RNA polymerase II and the general transcription factors. The polypeptide is Mediator of RNA polymerase II transcription subunit 30 (MED30) (Arabidopsis thaliana (Mouse-ear cress)).